Here is a 185-residue protein sequence, read N- to C-terminus: MILVIGLGNPGKEYQYTRHNIGFIAIEKIANQYNSSFSIKKKFNCEIAETISDGQKIIFIKPTTYMNLSGKSVISVKTYYNIQSAKIFVIHDDIDLETGRIKFKTGGGNGGHNGLKSIDGVIGNNYNRIRVGVGRPQNNQDVADYVLNNFLKSEYETALQAIDRIANNFDLILENKLEEFKNKIV.

Tyr-14 lines the tRNA pocket. His-19 serves as the catalytic Proton acceptor. The tRNA site is built by Tyr-65, Asn-67, and Asn-113.

It belongs to the PTH family. Monomer.

Its subcellular location is the cytoplasm. It catalyses the reaction an N-acyl-L-alpha-aminoacyl-tRNA + H2O = an N-acyl-L-amino acid + a tRNA + H(+). Functionally, hydrolyzes ribosome-free peptidyl-tRNAs (with 1 or more amino acids incorporated), which drop off the ribosome during protein synthesis, or as a result of ribosome stalling. Its function is as follows. Catalyzes the release of premature peptidyl moieties from peptidyl-tRNA molecules trapped in stalled 50S ribosomal subunits, and thus maintains levels of free tRNAs and 50S ribosomes. This chain is Peptidyl-tRNA hydrolase, found in Rickettsia felis (strain ATCC VR-1525 / URRWXCal2) (Rickettsia azadi).